The following is a 355-amino-acid chain: MYNFVKIFQSNFIDINKLSKFEIFLKTIFRIYSSPGRTHLLAHAADISAKYAVRKIYEYMRTDEEGIRILKEKPLLIRQDICFNELKKLPKNTLGYKYMEFLETYKLHAHDREVSHFIKDINESYILTRYRQIHDIAHVVYNLNISIEAEAALKLIELIQTKLPITLLAILIAPFMTPLYRFQYIFEHNIPSNFLCPNFDYTYNDDYNYIDEMSLKQYEYYLTDYFHVEKRESQSFYYKLYKYYFDNLNNSSHVRGSIIYGYQNKNYNDIHYDKLNNEYLYLKNNIKNYFHFQYKPRKLLLTNLYPWAYKTAIQTNKPLHSIYVEKWFDKDIDLFRKKYNITPLPSNLNLMAGIN.

Positions 134, 135, 138, and 150 each coordinate Zn(2+).

The protein belongs to the COQ4 family. As to quaternary structure, component of a multi-subunit COQ enzyme complex. The cofactor is Zn(2+).

Its subcellular location is the mitochondrion inner membrane. The catalysed reaction is a 4-hydroxy-3-methoxy-5-(all-trans-polyprenyl)benzoate + H(+) = a 2-methoxy-6-(all-trans-polyprenyl)phenol + CO2. It functions in the pathway cofactor biosynthesis; ubiquinone biosynthesis. Functionally, lyase that catalyzes the C1-decarboxylation of 4-hydroxy-3-methoxy-5-(all-trans-polyprenyl)benzoic acid into 2-methoxy-6-(all-trans-polyprenyl)phenol during ubiquinone biosynthesis. The sequence is that of Ubiquinone biosynthesis protein COQ4 homolog, mitochondrial from Plasmodium falciparum (isolate 3D7).